Here is an 86-residue protein sequence, read N- to C-terminus: Cell division topological specificity factor (86 aa).

The protein belongs to the MinE family.

In terms of biological role, prevents the cell division inhibition by proteins MinC and MinD at internal division sites while permitting inhibition at polar sites. This ensures cell division at the proper site by restricting the formation of a division septum at the midpoint of the long axis of the cell. The chain is Cell division topological specificity factor from Shewanella sediminis (strain HAW-EB3).